Reading from the N-terminus, the 158-residue chain is MWQFTVVSLGWLAVFLSLSGAKGNSCPASWISRNGVCNKLFPDRKTWLEAEMYCRALKPGGHLASLHKDSDSTVLAWYISDHFKGAGHVWIGLRDTNKKRSWKWSDRTSTNYFSWNQGEPNNVQDNENCVHLWAPSGYLKWNDEPCASLHPFICQYKL.

The signal sequence occupies residues 1-23; the sequence is MWQFTVVSLGWLAVFLSLSGAKG. 3 cysteine pairs are disulfide-bonded: cysteine 26/cysteine 37, cysteine 54/cysteine 154, and cysteine 129/cysteine 146. The C-type lectin domain occupies 33–155; sequence RNGVCNKLFP…CASLHPFICQ (123 aa). Positions 119–121 match the Mannose-binding motif; it reads EPN. Residues glutamate 127, asparagine 142, and aspartate 143 each coordinate Ca(2+).

Belongs to the true venom lectin family. In terms of tissue distribution, expressed by the venom gland.

It localises to the secreted. Mannose-binding lectin which recognizes specific carbohydrate structures and agglutinates a variety of animal cells by binding to cell-surface glycoproteins and glycolipids. May be a calcium-dependent lectin. The chain is C-type lectin from Cerberus rynchops (Dog-faced water snake).